Reading from the N-terminus, the 1398-residue chain is DNA-directed RNA polymerase subunit beta' (1398 aa).

4 residues coordinate Zn(2+): Cys71, Cys73, Cys86, and Cys89. Residues Asp462, Asp464, and Asp466 each contribute to the Mg(2+) site. 4 residues coordinate Zn(2+): Cys810, Cys884, Cys891, and Cys894.

The protein belongs to the RNA polymerase beta' chain family. In terms of assembly, the RNAP catalytic core consists of 2 alpha, 1 beta, 1 beta' and 1 omega subunit. When a sigma factor is associated with the core the holoenzyme is formed, which can initiate transcription. Mg(2+) serves as cofactor. Requires Zn(2+) as cofactor.

It carries out the reaction RNA(n) + a ribonucleoside 5'-triphosphate = RNA(n+1) + diphosphate. DNA-dependent RNA polymerase catalyzes the transcription of DNA into RNA using the four ribonucleoside triphosphates as substrates. The protein is DNA-directed RNA polymerase subunit beta' of Mesorhizobium japonicum (strain LMG 29417 / CECT 9101 / MAFF 303099) (Mesorhizobium loti (strain MAFF 303099)).